The following is a 154-amino-acid chain: Transcriptional repressor NrdR (154 aa).

A zinc finger lies at 3 to 34 (CPFCGNVDTQVKDSRPAEDNVAIRRRRFCPAC). The region spanning 49–139 (LVVVKSSGRR…VYKNFQAADD (91 aa)) is the ATP-cone domain.

It belongs to the NrdR family. Zn(2+) serves as cofactor.

Negatively regulates transcription of bacterial ribonucleotide reductase nrd genes and operons by binding to NrdR-boxes. The polypeptide is Transcriptional repressor NrdR (Paracoccus denitrificans (strain Pd 1222)).